The sequence spans 426 residues: Phosphoribosylamine--glycine ligase (426 aa).

One can recognise an ATP-grasp domain in the interval 109 to 312; that stretch reads KEVMEAAGVA…LAGVLNAVAT (204 aa). Position 138–193 (138–193) interacts with ATP; the sequence is LDYFGPMYVVKDDGLAAGKGVVVTADRAEARQHIHLVHAAGNPVLLESFLDGPEVS. Mg(2+) is bound by residues E282 and N284.

The protein belongs to the GARS family. Requires Mg(2+) as cofactor. The cofactor is Mn(2+).

The enzyme catalyses 5-phospho-beta-D-ribosylamine + glycine + ATP = N(1)-(5-phospho-beta-D-ribosyl)glycinamide + ADP + phosphate + H(+). The protein operates within purine metabolism; IMP biosynthesis via de novo pathway; N(1)-(5-phospho-D-ribosyl)glycinamide from 5-phospho-alpha-D-ribose 1-diphosphate: step 2/2. The sequence is that of Phosphoribosylamine--glycine ligase from Corynebacterium ammoniagenes (Brevibacterium ammoniagenes).